Consider the following 196-residue polypeptide: Peptide deformylase (196 aa).

2 residues coordinate Fe cation: Cys-123 and His-166. Glu-167 is a catalytic residue. Residue His-170 coordinates Fe cation.

Belongs to the polypeptide deformylase family. It depends on Fe(2+) as a cofactor.

It catalyses the reaction N-terminal N-formyl-L-methionyl-[peptide] + H2O = N-terminal L-methionyl-[peptide] + formate. Functionally, removes the formyl group from the N-terminal Met of newly synthesized proteins. Requires at least a dipeptide for an efficient rate of reaction. N-terminal L-methionine is a prerequisite for activity but the enzyme has broad specificity at other positions. The protein is Peptide deformylase of Lactococcus lactis subsp. lactis (strain IL1403) (Streptococcus lactis).